The chain runs to 139 residues: MPTINQLVKKPRTSKVKKSTAPALNKGYNSHKKKATDLASPQKRGVCTRVGTMTPKKPNSALRKYARVRLSNNIEVNAYIPGIGHNLQEHSVVLIRGGRVKDLPGVRYHIVRGALDTSGVDGRMQGRSLYGAKKPKEKK.

The tract at residues 1–44 (MPTINQLVKKPRTSKVKKSTAPALNKGYNSHKKKATDLASPQKR) is disordered. The segment covering 9–18 (KKPRTSKVKK) has biased composition (basic residues). A 3-methylthioaspartic acid modification is found at aspartate 102.

It belongs to the universal ribosomal protein uS12 family. In terms of assembly, part of the 30S ribosomal subunit. Contacts proteins S8 and S17. May interact with IF1 in the 30S initiation complex.

Its function is as follows. With S4 and S5 plays an important role in translational accuracy. Functionally, interacts with and stabilizes bases of the 16S rRNA that are involved in tRNA selection in the A site and with the mRNA backbone. Located at the interface of the 30S and 50S subunits, it traverses the body of the 30S subunit contacting proteins on the other side and probably holding the rRNA structure together. The combined cluster of proteins S8, S12 and S17 appears to hold together the shoulder and platform of the 30S subunit. This Macrococcus caseolyticus (strain JCSC5402) (Macrococcoides caseolyticum) protein is Small ribosomal subunit protein uS12.